Consider the following 600-residue polypeptide: Putative heme-binding protein NP_2262A (600 aa).

His-180 lines the heme pocket. The disordered stretch occupies residues 261–289 (TSETGHGGADSQTSSESSGGRPSTDPSHD). A compositionally biased stretch (polar residues) spans 270-285 (DSQTSSESSGGRPSTD). In terms of domain architecture, ABM spans 510–598 (GTMGMFYTVK…VLADRPRHVF (89 aa)).

It in the N-terminal section; belongs to the ChdC family.

The sequence is that of Putative heme-binding protein NP_2262A from Natronomonas pharaonis (strain ATCC 35678 / DSM 2160 / CIP 103997 / JCM 8858 / NBRC 14720 / NCIMB 2260 / Gabara) (Halobacterium pharaonis).